A 424-amino-acid chain; its full sequence is UPF0597 protein Ssed_2537 (424 aa).

The protein belongs to the UPF0597 family.

The chain is UPF0597 protein Ssed_2537 from Shewanella sediminis (strain HAW-EB3).